Consider the following 158-residue polypeptide: Protein Smg homolog (158 aa).

It belongs to the Smg family.

The chain is Protein Smg homolog from Shewanella oneidensis (strain ATCC 700550 / JCM 31522 / CIP 106686 / LMG 19005 / NCIMB 14063 / MR-1).